The chain runs to 321 residues: Tetraketide alpha-pyrone reductase 2 (321 aa).

Ser-2 is modified (N-acetylserine). NADP(+) contacts are provided by residues Tyr-4–Val-28, Lys-40, and Tyr-160.

The protein belongs to the NAD(P)-dependent epimerase/dehydratase family. Dihydroflavonol-4-reductase subfamily.

The protein resides in the cytoplasm. In terms of biological role, may be involved in the biosynthesis of hydroxylated tetraketide compounds that serve as sporopollenin precursors (the main constituents of exine). Acts on tetraketide alpha-pyrones and reduces the carbonyl function on the tetraketide alkyl chain to a secondary alcohol function. The polypeptide is Tetraketide alpha-pyrone reductase 2 (TKPR2) (Arabidopsis thaliana (Mouse-ear cress)).